Reading from the N-terminus, the 187-residue chain is GTP cyclohydrolase 1 (187 aa).

Positions 76, 79, and 148 each coordinate Zn(2+).

The protein belongs to the GTP cyclohydrolase I family. Homomer.

The enzyme catalyses GTP + H2O = 7,8-dihydroneopterin 3'-triphosphate + formate + H(+). It functions in the pathway cofactor biosynthesis; 7,8-dihydroneopterin triphosphate biosynthesis; 7,8-dihydroneopterin triphosphate from GTP: step 1/1. The polypeptide is GTP cyclohydrolase 1 (Desulforamulus reducens (strain ATCC BAA-1160 / DSM 100696 / MI-1) (Desulfotomaculum reducens)).